The chain runs to 294 residues: 33 kDa chaperonin (294 aa).

Disulfide bonds link C235/C237 and C268/C271.

The protein belongs to the HSP33 family. Under oxidizing conditions two disulfide bonds are formed involving the reactive cysteines. Under reducing conditions zinc is bound to the reactive cysteines and the protein is inactive.

It is found in the cytoplasm. Redox regulated molecular chaperone. Protects both thermally unfolding and oxidatively damaged proteins from irreversible aggregation. Plays an important role in the bacterial defense system toward oxidative stress. This is 33 kDa chaperonin from Proteus mirabilis (strain HI4320).